Consider the following 249-residue polypeptide: Probable septum site-determining protein MinC (249 aa).

The disordered stretch occupies residues 115 to 144 (PTAVSPPPPPPPPPARAEPAPPAARPAPGR). Positions 118–139 (VSPPPPPPPPPARAEPAPPAAR) are enriched in pro residues.

The protein belongs to the MinC family. As to quaternary structure, interacts with MinD and FtsZ.

Its function is as follows. Cell division inhibitor that blocks the formation of polar Z ring septums. Rapidly oscillates between the poles of the cell to destabilize FtsZ filaments that have formed before they mature into polar Z rings. Prevents FtsZ polymerization. The protein is Probable septum site-determining protein MinC of Xanthomonas axonopodis pv. citri (strain 306).